Reading from the N-terminus, the 204-residue chain is MKISKRQQDIYEFIKSEVKEKGYPPSVREIGEAVGLASSSTVHGHLARLEGKGLIRRDPTKPRAIEILSLEDEAETPNVVNIPIIGKVTAGMPITAIENIEEYFPLPEYMAAGETNVFMLEIDGESMINAGILDGDKVIVRQQSSAINGEIVVAMTDENEATCKRFYKEANHFRLQPENDALEPIILNNVTILGKVIGLYRDIH.

A DNA-binding region (H-T-H motif) is located at residues 27-47 (VREIGEAVGLASSSTVHGHLA). Catalysis depends on for autocatalytic cleavage activity residues Ser126 and Lys164.

The protein belongs to the peptidase S24 family. Homodimer.

It catalyses the reaction Hydrolysis of Ala-|-Gly bond in repressor LexA.. Represses a number of genes involved in the response to DNA damage (SOS response), including recA and lexA. In the presence of single-stranded DNA, RecA interacts with LexA causing an autocatalytic cleavage which disrupts the DNA-binding part of LexA, leading to derepression of the SOS regulon and eventually DNA repair. The chain is LexA repressor from Listeria innocua serovar 6a (strain ATCC BAA-680 / CLIP 11262).